Reading from the N-terminus, the 122-residue chain is Small ribosomal subunit protein uS13 (122 aa).

The segment at 97-122 is disordered; it reads PVRGQRTHTNARTRKGPAKAIAGKKK.

This sequence belongs to the universal ribosomal protein uS13 family. As to quaternary structure, part of the 30S ribosomal subunit. Forms a loose heterodimer with protein S19. Forms two bridges to the 50S subunit in the 70S ribosome.

In terms of biological role, located at the top of the head of the 30S subunit, it contacts several helices of the 16S rRNA. In the 70S ribosome it contacts the 23S rRNA (bridge B1a) and protein L5 of the 50S subunit (bridge B1b), connecting the 2 subunits; these bridges are implicated in subunit movement. Contacts the tRNAs in the A and P-sites. The sequence is that of Small ribosomal subunit protein uS13 from Brucella abortus (strain S19).